Here is a 319-residue protein sequence, read N- to C-terminus: MQVTFLGTSSGVPTRARNVSAVALRLPQRSEMWLFDCGEGTQHQFLRSDLRLSQLRRVFITHMHGDHVFGLPGLLASLGLAGSSSAGVDLYGPDPLESYLNGVLRTSSTRIGYPLAVHRVRDAAEQGTLLFEDDDFTVRCTLLTHRVPAYAYRIEQKPLAGRFDIEKARELNIPPGPVYAQLKRGETVTLEDGRSIDGTSLCGEERPGVSVVYCTDTVFCEAAIELARGADLLIHESTFAHGEAEMAFQKQHSTSTMAAQTAAEAGVGQLVLTHLSPRYVLGNPVTPQDLLNEAKAIFPNTLLAKDFLSIDVKPRCNSS.

Residues H62, H64, D66, H67, H145, D216, and H274 each coordinate Zn(2+). Residue D66 is the Proton acceptor of the active site.

This sequence belongs to the RNase Z family. Homodimer. Zn(2+) serves as cofactor.

It catalyses the reaction Endonucleolytic cleavage of RNA, removing extra 3' nucleotides from tRNA precursor, generating 3' termini of tRNAs. A 3'-hydroxy group is left at the tRNA terminus and a 5'-phosphoryl group is left at the trailer molecule.. In terms of biological role, zinc phosphodiesterase, which displays some tRNA 3'-processing endonuclease activity. Probably involved in tRNA maturation, by removing a 3'-trailer from precursor tRNA. The chain is Ribonuclease Z from Synechococcus sp. (strain CC9605).